Reading from the N-terminus, the 128-residue chain is Small ribosomal subunit protein bS16 (128 aa).

The segment at 107–128 (AAEAKAAAANESDDSGTDSTES) is disordered. Acidic residues predominate over residues 117-128 (ESDDSGTDSTES).

It belongs to the bacterial ribosomal protein bS16 family.

The polypeptide is Small ribosomal subunit protein bS16 (Synechococcus sp. (strain CC9311)).